A 68-amino-acid polypeptide reads, in one-letter code: Guanine nucleotide-binding protein G(I)/G(S)/G(O) subunit gamma-5 (68 aa).

At S2 the chain carries N-acetylserine. S2 carries the post-translational modification Phosphoserine. C65 is subject to Cysteine methyl ester. C65 carries S-geranylgeranyl cysteine lipidation. A propeptide spans 66 to 68 (removed in mature form); it reads SFL.

Belongs to the G protein gamma family. As to quaternary structure, g proteins are composed of 3 units, alpha, beta and gamma. As to expression, expressed in a variety of tissues.

It localises to the cell membrane. Functionally, guanine nucleotide-binding proteins (G proteins) are involved as a modulator or transducer in various transmembrane signaling systems. The beta and gamma chains are required for the GTPase activity, for replacement of GDP by GTP, and for G protein-effector interaction. This is Guanine nucleotide-binding protein G(I)/G(S)/G(O) subunit gamma-5 (GNG5) from Bos taurus (Bovine).